Here is a 476-residue protein sequence, read N- to C-terminus: MSYEERVNAHPNLGDESDVEEEALVNDYREQVNFDDGMSELERTTSLGTGSQTQDLQAQLAAAATPLEYQATLETKFASYDNYCSLFHYILNSEGPVELEVPSYYWAWDVIDEFIYQFESFCRYRNRVARSGSNEEEAQLLRENPNTWGCYSVLNVLYSLIQKSQINEQLAAIKRGEDPLAFAGEYGSRPLYKMLGYFSIIGLLRVHCLLGDFSLALKTLDDIEMNKKAMFARVMAAHFTTYYYVGFSYMMMRRYGDAIRMFSHILVYVSRTKNFQKGGNSYDAIAKKNDQMYALIAICVALHPTRLDDTIHSALREKYGEQLLRLQHGGPDALPLFEELFRSACPKFISPTPPDFDNPALNIDPVDHHTAIFMDEVKNTLYNPTIRSYLKLYTTMDLKKLAGFLEVQPEVLRSWLLVNKQRSRQVRWVEGGLLEGEVVSANDLDYALENDLIHVSETKAGRRLVDWYLRNLARVY.

One can recognise a PCI domain in the interval 257–452; it reads DAIRMFSHIL…DLDYALENDL (196 aa).

This sequence belongs to the eIF-3 subunit L family. As to quaternary structure, component of the eukaryotic translation initiation factor 3 (eIF-3) complex.

It localises to the cytoplasm. Component of the eukaryotic translation initiation factor 3 (eIF-3) complex, which is involved in protein synthesis of a specialized repertoire of mRNAs and, together with other initiation factors, stimulates binding of mRNA and methionyl-tRNAi to the 40S ribosome. The eIF-3 complex specifically targets and initiates translation of a subset of mRNAs involved in cell proliferation. This Neosartorya fischeri (strain ATCC 1020 / DSM 3700 / CBS 544.65 / FGSC A1164 / JCM 1740 / NRRL 181 / WB 181) (Aspergillus fischerianus) protein is Eukaryotic translation initiation factor 3 subunit L.